Reading from the N-terminus, the 166-residue chain is Arginine repressor (166 aa).

It belongs to the ArgR family.

The protein resides in the cytoplasm. It functions in the pathway amino-acid biosynthesis; L-arginine biosynthesis [regulation]. Regulates arginine biosynthesis genes. This Mycobacterium ulcerans (strain Agy99) protein is Arginine repressor.